Consider the following 332-residue polypeptide: Ferredoxin--NADP reductase (332 aa).

FAD contacts are provided by D33, Q41, Y46, A86, F120, D286, and T327.

It belongs to the ferredoxin--NADP reductase type 2 family. As to quaternary structure, homodimer. The cofactor is FAD.

It carries out the reaction 2 reduced [2Fe-2S]-[ferredoxin] + NADP(+) + H(+) = 2 oxidized [2Fe-2S]-[ferredoxin] + NADPH. In Rickettsia bellii (strain OSU 85-389), this protein is Ferredoxin--NADP reductase.